An 863-amino-acid polypeptide reads, in one-letter code: Leucine--tRNA ligase (863 aa).

The short motif at Pro-40 to His-51 is the 'HIGH' region element. Residues Lys-635–Ser-639 carry the 'KMSKS' region motif. Lys-638 contributes to the ATP binding site.

It belongs to the class-I aminoacyl-tRNA synthetase family.

It is found in the cytoplasm. It catalyses the reaction tRNA(Leu) + L-leucine + ATP = L-leucyl-tRNA(Leu) + AMP + diphosphate. This Leptospira interrogans serogroup Icterohaemorrhagiae serovar copenhageni (strain Fiocruz L1-130) protein is Leucine--tRNA ligase.